Consider the following 95-residue polypeptide: Small ribosomal subunit protein bS6 (95 aa).

Belongs to the bacterial ribosomal protein bS6 family.

Its function is as follows. Binds together with bS18 to 16S ribosomal RNA. This Geobacillus sp. (strain WCH70) protein is Small ribosomal subunit protein bS6.